We begin with the raw amino-acid sequence, 290 residues long: F-box protein PP2-A13 (290 aa).

The region spanning 21–67 is the F-box domain; the sequence is RKLRLVDLPENCVALIMTRLDPPEICRLARLNRMFRRASSADFIWES.

Part of a SCF (ASK-cullin-F-box) protein ligase complex. Interacts with SKP1A/ASK1, SKP1B/ASK2, ASK5, ASK11 and ASK13.

The protein localises to the nucleus. It functions in the pathway protein modification; protein ubiquitination. In terms of biological role, component of SCF(ASK-cullin-F-box) E3 ubiquitin ligase complexes, which may mediate the ubiquitination and subsequent proteasomal degradation of target proteins. This Arabidopsis thaliana (Mouse-ear cress) protein is F-box protein PP2-A13 (PP2A13).